The sequence spans 238 residues: HTH-type transcriptional regulator TreR (238 aa).

An HTH gntR-type domain is found at 1-71 (MKVNKFITIY…RGKGSVVLNR (71 aa)). Residues 31 to 50 (EHELTAQYGTSRETVRKALH) constitute a DNA-binding region (H-T-H motif).

As to quaternary structure, dimer of dimers.

Functionally, repressor for the trePA operon. It is able to bind trehalose-6-phosphate. This chain is HTH-type transcriptional regulator TreR (treR), found in Bacillus subtilis (strain 168).